The sequence spans 233 residues: Synaptogyrin-1 (233 aa).

M1 is subject to N-acetylmethionine. The Cytoplasmic segment spans residues 1–23; the sequence is MEGGAYGAGKAGGAFDPYTLVRQ. Residues 20–173 enclose the MARVEL domain; it reads LVRQPHTILR…QAVLAFQRYQ (154 aa). Residues 24-44 traverse the membrane as a helical segment; that stretch reads PHTILRVVSWLFSIVVFGSIV. Over 45-71 the chain is Lumenal; it reads NEGYLNSASEGEEFCIYNRNPNACSYG. A helical membrane pass occupies residues 72–92; that stretch reads VAVGVLAFLTCLLYLALDVYF. The Cytoplasmic segment spans residues 93–103; it reads PQISSVKDRKK. Residues 104 to 124 traverse the membrane as a helical segment; the sequence is AVLSDIGVSAFWAFLWFVGFC. The Lumenal portion of the chain corresponds to 125 to 148; sequence YLANQWQVSKPKDNPLNEGTDAAR. Residues 149–169 form a helical membrane-spanning segment; the sequence is AAIAFSFFSIFTWAGQAVLAF. The Cytoplasmic segment spans residues 170 to 233; the sequence is QRYQIGADSA…EPQGYQSQGY (64 aa). Residues 194–233 form a disordered region; that stretch reads MPYAPYVEPTGPDPAGMGGTYQQPANTFDTEPQGYQSQGY. A compositionally biased stretch (polar residues) spans 213–233; it reads TYQQPANTFDTEPQGYQSQGY.

The protein belongs to the synaptogyrin family.

The protein localises to the cytoplasmic vesicle. It is found in the secretory vesicle. It localises to the synaptic vesicle membrane. Its subcellular location is the melanosome. May play a role in regulated exocytosis. Modulates the localization of synaptophysin/SYP into synaptic-like microvesicles and may therefore play a role in synaptic-like microvesicle formation and/or maturation. Involved in the regulation of short-term and long-term synaptic plasticity. The sequence is that of Synaptogyrin-1 from Homo sapiens (Human).